The primary structure comprises 354 residues: 3-isopropylmalate dehydrogenase (354 aa).

73–86 (GPAYDKLDRPLRPE) is an NAD(+) binding site. Residues Arg-93, Arg-103, Arg-131, and Asp-221 each coordinate substrate. The Mg(2+) site is built by Asp-221, Asp-245, and Asp-249. 279–291 (GSAPDIAGQNLAN) provides a ligand contact to NAD(+).

It belongs to the isocitrate and isopropylmalate dehydrogenases family. LeuB type 1 subfamily. As to quaternary structure, homodimer. The cofactor is Mg(2+). It depends on Mn(2+) as a cofactor.

It is found in the cytoplasm. The enzyme catalyses (2R,3S)-3-isopropylmalate + NAD(+) = 4-methyl-2-oxopentanoate + CO2 + NADH. Its pathway is amino-acid biosynthesis; L-leucine biosynthesis; L-leucine from 3-methyl-2-oxobutanoate: step 3/4. Functionally, catalyzes the oxidation of 3-carboxy-2-hydroxy-4-methylpentanoate (3-isopropylmalate) to 3-carboxy-4-methyl-2-oxopentanoate. The product decarboxylates to 4-methyl-2 oxopentanoate. This Chromobacterium violaceum (strain ATCC 12472 / DSM 30191 / JCM 1249 / CCUG 213 / NBRC 12614 / NCIMB 9131 / NCTC 9757 / MK) protein is 3-isopropylmalate dehydrogenase.